Reading from the N-terminus, the 156-residue chain is Ribosomal RNA large subunit methyltransferase H (156 aa).

S-adenosyl-L-methionine contacts are provided by residues L73, G104, and 123-128 (VSSLTL).

It belongs to the RNA methyltransferase RlmH family. As to quaternary structure, homodimer.

It localises to the cytoplasm. It carries out the reaction pseudouridine(1915) in 23S rRNA + S-adenosyl-L-methionine = N(3)-methylpseudouridine(1915) in 23S rRNA + S-adenosyl-L-homocysteine + H(+). In terms of biological role, specifically methylates the pseudouridine at position 1915 (m3Psi1915) in 23S rRNA. The sequence is that of Ribosomal RNA large subunit methyltransferase H from Burkholderia mallei (strain NCTC 10247).